Consider the following 446-residue polypeptide: Histidine--tRNA ligase (446 aa).

This sequence belongs to the class-II aminoacyl-tRNA synthetase family. Homodimer.

The protein localises to the cytoplasm. It carries out the reaction tRNA(His) + L-histidine + ATP = L-histidyl-tRNA(His) + AMP + diphosphate + H(+). This is Histidine--tRNA ligase from Burkholderia lata (strain ATCC 17760 / DSM 23089 / LMG 22485 / NCIMB 9086 / R18194 / 383).